We begin with the raw amino-acid sequence, 462 residues long: Cysteine--tRNA ligase (462 aa).

Cys-24 lines the Zn(2+) pocket. A 'HIGH' region motif is present at residues 26–36 (PTVYDDAHLGH). Positions 199, 224, and 228 each coordinate Zn(2+). The 'KMSKS' region signature appears at 256-260 (KMSKS). Position 259 (Lys-259) interacts with ATP.

It belongs to the class-I aminoacyl-tRNA synthetase family. As to quaternary structure, monomer. Requires Zn(2+) as cofactor.

The protein localises to the cytoplasm. The enzyme catalyses tRNA(Cys) + L-cysteine + ATP = L-cysteinyl-tRNA(Cys) + AMP + diphosphate. In Campylobacter jejuni subsp. doylei (strain ATCC BAA-1458 / RM4099 / 269.97), this protein is Cysteine--tRNA ligase.